Here is a 773-residue protein sequence, read N- to C-terminus: Phenylalanine--tRNA ligase beta subunit (773 aa).

A tRNA-binding domain is found at 39–150 (LKAPDKVVVG…GKLELGRPLN (112 aa)). Residues 391 to 467 (KELPIIPISI…RIIGIDNIAS (77 aa)) form the B5 domain. Residues Asp-445, Asp-451, Glu-454, and Glu-455 each contribute to the Mg(2+) site. In terms of domain architecture, FDX-ACB spans 682–773 (SKFPAITRDL…TLKNLGLDLR (92 aa)).

It belongs to the phenylalanyl-tRNA synthetase beta subunit family. Type 1 subfamily. Tetramer of two alpha and two beta subunits. Mg(2+) is required as a cofactor.

It localises to the cytoplasm. The catalysed reaction is tRNA(Phe) + L-phenylalanine + ATP = L-phenylalanyl-tRNA(Phe) + AMP + diphosphate + H(+). The polypeptide is Phenylalanine--tRNA ligase beta subunit (pheT) (Campylobacter jejuni subsp. jejuni serotype O:2 (strain ATCC 700819 / NCTC 11168)).